Consider the following 434-residue polypeptide: Trigger factor (434 aa).

In terms of domain architecture, PPIase FKBP-type spans 161 to 246 (EDRVTVDFTG…LKKVEQRELP (86 aa)).

The protein belongs to the FKBP-type PPIase family. Tig subfamily.

It is found in the cytoplasm. It carries out the reaction [protein]-peptidylproline (omega=180) = [protein]-peptidylproline (omega=0). In terms of biological role, involved in protein export. Acts as a chaperone by maintaining the newly synthesized protein in an open conformation. Functions as a peptidyl-prolyl cis-trans isomerase. The protein is Trigger factor of Sodalis glossinidius (strain morsitans).